Reading from the N-terminus, the 196-residue chain is RNA pyrophosphohydrolase (196 aa).

A Nudix hydrolase domain is found at Gly-6–Lys-149. Positions Gly-38–Gly-59 match the Nudix box motif. Positions Ser-166–Gln-196 are disordered. Residues Arg-167–Lys-184 show a composition bias toward polar residues. The segment covering Tyr-185 to Gln-196 has biased composition (basic residues).

The protein belongs to the Nudix hydrolase family. RppH subfamily. A divalent metal cation serves as cofactor.

Its function is as follows. Accelerates the degradation of transcripts by removing pyrophosphate from the 5'-end of triphosphorylated RNA, leading to a more labile monophosphorylated state that can stimulate subsequent ribonuclease cleavage. The chain is RNA pyrophosphohydrolase from Haemophilus influenzae (strain 86-028NP).